We begin with the raw amino-acid sequence, 41 residues long: M-factor (41 aa).

Positions 1 to 25 (MDSMANTVSSSVVNTGNKPSETLNK) are disordered. A propeptide spanning residues 1-29 (MDSMANTVSSSVVNTGNKPSETLNKTVKN) is cleaved from the precursor. Position 38 is a cysteine methyl ester (Cys38). Cys38 carries the S-farnesyl cysteine lipid modification. Positions 39 to 41 (VIA) are cleaved as a propeptide — removed in mature form.

The protein resides in the secreted. In terms of biological role, M-factor is a mating pheromone produced by M-type mating cells. All three mfm genes contribute to the production of M-factor. The chain is M-factor (mfm3) from Schizosaccharomyces pombe (strain 972 / ATCC 24843) (Fission yeast).